The sequence spans 352 residues: Fe-S cluster assembly protein DRE2 (352 aa).

A compositionally biased stretch (polar residues) spans 1-11 (MAPTAVYTQKD). The interval 1 to 24 (MAPTAVYTQKDSPSSSQPSSKGPA) is disordered. The interval 1-196 (MAPTAVYTQK…TVTSAPSVPL (196 aa)) is N-terminal SAM-like domain. Positions 196-237 (LLLRKRGDPAKKKALWALTTDASASPSTKIDADALLTAEDKA) are linker. Positions 243, 257, 260, and 262 each coordinate [2Fe-2S] cluster. The tract at residues 243–262 (CAPVDRSAPRRKKACKNCSC) is fe-S binding site A. [4Fe-4S] cluster contacts are provided by Cys-315, Cys-318, Cys-326, and Cys-329. 2 consecutive short sequence motifs (cx2C motif) follow at residues 315 to 318 (CGSC) and 326 to 329 (CAGC). The tract at residues 315 to 329 (CGSCFLGDAFRCAGC) is fe-S binding site B.

It belongs to the anamorsin family. Monomer. Interacts with TAH18. Interacts with MIA40. Requires [2Fe-2S] cluster as cofactor. The cofactor is [4Fe-4S] cluster.

It is found in the cytoplasm. The protein resides in the mitochondrion intermembrane space. Component of the cytosolic iron-sulfur (Fe-S) protein assembly (CIA) machinery required for the maturation of extramitochondrial Fe-S proteins. Part of an electron transfer chain functioning in an early step of cytosolic Fe-S biogenesis, facilitating the de novo assembly of a [4Fe-4S] cluster on the scaffold complex CFD1-NBP35. Electrons are transferred to DRE2 from NADPH via the FAD- and FMN-containing protein TAH18. TAH18-DRE2 are also required for the assembly of the diferric tyrosyl radical cofactor of ribonucleotide reductase (RNR), probably by providing electrons for reduction during radical cofactor maturation in the catalytic small subunit RNR2. The polypeptide is Fe-S cluster assembly protein DRE2 (Coprinopsis cinerea (strain Okayama-7 / 130 / ATCC MYA-4618 / FGSC 9003) (Inky cap fungus)).